The sequence spans 1080 residues: Isoleucine--tRNA ligase (1080 aa).

A 'HIGH' region motif is present at residues 48–58 (PYASGSIHLGT). Positions 628-632 (KMSKS) match the 'KMSKS' region motif. An ATP-binding site is contributed by lysine 631.

This sequence belongs to the class-I aminoacyl-tRNA synthetase family. IleS type 2 subfamily. Monomer. Requires Zn(2+) as cofactor.

It is found in the cytoplasm. It catalyses the reaction tRNA(Ile) + L-isoleucine + ATP = L-isoleucyl-tRNA(Ile) + AMP + diphosphate. Catalyzes the attachment of isoleucine to tRNA(Ile). As IleRS can inadvertently accommodate and process structurally similar amino acids such as valine, to avoid such errors it has two additional distinct tRNA(Ile)-dependent editing activities. One activity is designated as 'pretransfer' editing and involves the hydrolysis of activated Val-AMP. The other activity is designated 'posttransfer' editing and involves deacylation of mischarged Val-tRNA(Ile). The chain is Isoleucine--tRNA ligase from Methanopyrus kandleri (strain AV19 / DSM 6324 / JCM 9639 / NBRC 100938).